The following is a 51-amino-acid chain: Large ribosomal subunit protein eL39-like (51 aa).

Belongs to the eukaryotic ribosomal protein eL39 family. Component of a male germ cell-specific 60S large ribosomal subunit (LSU), which contains RPL10L and RPL39L, instead of RPL10 and RPL39 paralogs. The composition of the rest of the complex is similar to classical ribosomes. Highly expressed in spermatocytes and spermatids. Highly expressed in embryonic stem cells.

Its subcellular location is the cytoplasm. Its function is as follows. Male germ cell-specific component of the ribosome, which is required for the formation of sperm and male fertility. Replaces the RPL39 paralog in the ribosome of male germ cells. The ribosome is a large ribonucleoprotein complex responsible for the synthesis of proteins in the cell. The male germ cell-specific ribosome displays a ribosomal polypeptide exit tunnel of distinct size and charge states compared with the classical ribosome. It is responsible for regulating the biosynthesis and folding of a subset of male germ-cell-specific proteins that are essential for the formation of sperm. This chain is Large ribosomal subunit protein eL39-like, found in Mus musculus (Mouse).